Here is a 662-residue protein sequence, read N- to C-terminus: MVLSEVDIAKADPAAASHPVLLNGDANVAQKNLGSVAENNLCSQYEEKVRPCIDLIDSLRALGVEQDLALPAIAVIGDQSSGKSSVLEALSGVALPRGSGIVTRCPLVLKLKKLVNEDKWRGKVSYQDYEIEISDASEVEKEINKAQNTIAGEGMGISHELITLEISSRDVPDLTLIDLPGITRVAVGNQPADIGYKIKTLIKKYIQRQETISLVVVPSNVDIATTEALSMAQEVDPEGDRTIGILTKPDLVDKGTEDKVVDVVRNLVFHLKKGYMIVKCRGQQEIQDQLSLSEALQREKIFFEDHPYFRDLLEEGKATVPCLAEKLTSELITHICKSLPLLENQIRESHQRITEELQKYGVDVPEDENEKMFFLIDKINAFNQDITALIQGEETVGEEDIRLFTRLRHEFHKWSIIIENNFQEGHKILSRKIQKFENQYRGRGLPGFVNYRTFETIVKQQIKALEEPAVDMLHTVTDMVRLAFTDVSIKNFEEFFNLHRTAKSKIEDIRAEQEREGEKLIRLHFQMEQIVYCQDQVYRGALQKVREKELEEEKKKKSWDFGAFQSSSATDSSMEEIFQHLMAYHQEASKRISSHIPLIIQFFMLQTYGQQLQKAMLQLLQDKDTYSWLLKERGDTSDKRKFLKERLARLTQARRRLAQFPG.

An N-acetylmethionine modification is found at Met-1. The Dynamin-type G domain maps to 67-340 (DLALPAIAVI…LITHICKSLP (274 aa)). Residues 77-84 (GDQSSGKS) are G1 motif. 77–84 (GDQSSGKS) is a GTP binding site. The G2 motif stretch occupies residues 102 to 104 (VTR). The segment at 178–181 (DLPG) is G3 motif. GTP is bound by residues 178 to 182 (DLPGI) and 247 to 250 (TKPD). Residues 247-250 (TKPD) form a G4 motif region. A G5 motif region spans residues 279–282 (KCRG). Residues 341-366 (LLENQIRESHQRITEELQKYGVDVPE) form a bundle signaling element (BSE) region. The segment at 366 to 533 (EDENEKMFFL…HFQMEQIVYC (168 aa)) is middle domain. Positions 367-632 (DENEKMFFLI…KDTYSWLLKE (266 aa)) are stalk. The interval 554 to 557 (KKKK) is critical for lipid-binding. Positions 574-662 (MEEIFQHLMA…ARRRLAQFPG (89 aa)) constitute a GED domain.

It belongs to the TRAFAC class dynamin-like GTPase superfamily. Dynamin/Fzo/YdjA family. In terms of assembly, homooligomer. Oligomerizes into multimeric filamentous or ring-like structures by virtue of its stalk domain. Oligomerization is critical for GTPase activity, protein stability, and recognition of viral target structures. Interacts with TRPC1, TRPC3, TRPC4, TRPC5, TRPC6 and TRPC7. Interacts with HSPA5. Interacts with TUBB/TUBB5. Interacts with DDX39A and DDX39B. ISGylated.

The protein localises to the cytoplasm. It is found in the endoplasmic reticulum membrane. The protein resides in the perinuclear region. Functionally, interferon-induced dynamin-like GTPase with antiviral activity. The sequence is that of Interferon-induced GTP-binding protein Mx1 (MX1) from Pongo abelii (Sumatran orangutan).